The primary structure comprises 157 residues: Protein Smg homolog (157 aa).

This sequence belongs to the Smg family.

In Pseudoalteromonas translucida (strain TAC 125), this protein is Protein Smg homolog.